The chain runs to 189 residues: Threonylcarbamoyl-AMP synthase (189 aa).

Positions 9 to 189 constitute a YrdC-like domain; sequence ASAQRKLSVY…IDGETGKRLR (181 aa).

It belongs to the SUA5 family. TsaC subfamily.

The protein localises to the cytoplasm. It carries out the reaction L-threonine + hydrogencarbonate + ATP = L-threonylcarbamoyladenylate + diphosphate + H2O. Its function is as follows. Required for the formation of a threonylcarbamoyl group on adenosine at position 37 (t(6)A37) in tRNAs that read codons beginning with adenine. Catalyzes the conversion of L-threonine, HCO(3)(-)/CO(2) and ATP to give threonylcarbamoyl-AMP (TC-AMP) as the acyladenylate intermediate, with the release of diphosphate. This Neisseria gonorrhoeae (strain ATCC 700825 / FA 1090) protein is Threonylcarbamoyl-AMP synthase.